A 998-amino-acid chain; its full sequence is Methyl sulfide methyltransferase-associated sensor (998 aa).

The 38-residue stretch at 40–77 folds into the PAS 1 domain; it reads FGYSPKDFISGGLGYADIIYPADLEIAVSQFFSYVEKD. In terms of domain architecture, PAC 1 spans 117–169; it reads FTQQYRLLNKSGDVLWVEAEIKVLEEEEGKAGLFQVTVFDISRWKHTEKAMPA. One can recognise a PAS 2 domain in the interval 209–246; that stretch reads LGYTPEDFTSGRIVYTDIIHPDDLDNVRAEVSKNTEEG. Residues 250–302 form the PAC 2 domain; sequence FSKEYRVLAKSGEVRYVDERTLIRRNEKGEITCYQGILLDITQRKEAEELILS. Residues 314–458 enclose the GAF 1 domain; it reads ASLDEVLLLL…NAYLAGIAIE (145 aa). The PAS 3 domain maps to 469 to 540; the sequence is SENRFRTIFD…ENMQKIKAEG (72 aa). One can recognise a GAF 2 domain in the interval 609–752; the sequence is ASLKEITDFA…LMQGMWQLIQ (144 aa). Position 656 (Cys-656) interacts with heme. The region spanning 783-998 is the Histidine kinase domain; that stretch reads EFVEEMMFPE…GNLMHVKLPK (216 aa).

It depends on heme as a cofactor. In terms of processing, autophosphorylates: autophosphorylation is dependent on the redox state of heme cofactor and is promoted upon reduction.

It localises to the cytoplasm. The catalysed reaction is ATP + protein L-histidine = ADP + protein N-phospho-L-histidine.. In terms of biological role, heme-binding sensor kinase component part of a two-component regulatory system involved in methyl sulfide metabolism. Does not act as a phytochrome-like photoreceptor. The protein is Methyl sulfide methyltransferase-associated sensor (msmS) of Methanosarcina acetivorans (strain ATCC 35395 / DSM 2834 / JCM 12185 / C2A).